The following is an 839-amino-acid chain: LPS-assembly protein LptD (839 aa).

The first 21 residues, 1–21 (MAIGITACVLSLINYQGLAYS), serve as a signal peptide directing secretion.

Belongs to the LptD family. Component of the lipopolysaccharide transport and assembly complex. Interacts with LptE and LptA.

The protein localises to the cell outer membrane. In terms of biological role, together with LptE, is involved in the assembly of lipopolysaccharide (LPS) at the surface of the outer membrane. This is LPS-assembly protein LptD from Legionella pneumophila subsp. pneumophila (strain Philadelphia 1 / ATCC 33152 / DSM 7513).